Here is an 86-residue protein sequence, read N- to C-terminus: UPF0297 protein SSP1144 (86 aa).

This sequence belongs to the UPF0297 family.

This chain is UPF0297 protein SSP1144, found in Staphylococcus saprophyticus subsp. saprophyticus (strain ATCC 15305 / DSM 20229 / NCIMB 8711 / NCTC 7292 / S-41).